Consider the following 90-residue polypeptide: Small ribosomal subunit protein bS16 (90 aa).

Belongs to the bacterial ribosomal protein bS16 family.

This chain is Small ribosomal subunit protein bS16, found in Oceanobacillus iheyensis (strain DSM 14371 / CIP 107618 / JCM 11309 / KCTC 3954 / HTE831).